Here is a 602-residue protein sequence, read N- to C-terminus: MMIKRSITTNMKALRLIQPHLLKTGSLRTDLLCTISSFFSSCERDFSSISNGNVCFRERLRSGIVDIKKDDAIALFQEMIRSRPLPSLVDFSRFFSAIARTKQFNLVLDFCKQLELNGIAHNIYTLNIMINCFCRCCKTCFAYSVLGKVMKLGYEPDTTTFNTLIKGLFLEGKVSEAVVLVDRMVENGCQPDVVTYNSIVNGICRSGDTSLALDLLRKMEERNVKADVFTYSTIIDSLCRDGCIDAAISLFKEMETKGIKSSVVTYNSLVRGLCKAGKWNDGALLLKDMVSREIVPNVITFNVLLDVFVKEGKLQEANELYKEMITRGISPNIITYNTLMDGYCMQNRLSEANNMLDLMVRNKCSPDIVTFTSLIKGYCMVKRVDDGMKVFRNISKRGLVANAVTYSILVQGFCQSGKIKLAEELFQEMVSHGVLPDVMTYGILLDGLCDNGKLEKALEIFEDLQKSKMDLGIVMYTTIIEGMCKGGKVEDAWNLFCSLPCKGVKPNVMTYTVMISGLCKKGSLSEANILLRKMEEDGNAPNDCTYNTLIRAHLRDGDLTASAKLIEEMKSCGFSADASSIKMVIDMLLSGELDKSFLDMLS.

The transit peptide at 1–95 (MMIKRSITTN…PSLVDFSRFF (95 aa)) directs the protein to the mitochondrion. 14 PPR repeats span residues 87 to 121 (SLVD…GIAH), 122 to 156 (NIYT…GYEP), 157 to 191 (DTTT…GCQP), 192 to 226 (DVVT…NVKA), 227 to 261 (DVFT…GIKS), 262 to 296 (SVVT…EIVP), 297 to 331 (NVIT…GISP), 332 to 366 (NIIT…KCSP), 367 to 401 (DIVT…GLVA), 402 to 436 (NAVT…GVLP), 437 to 471 (DVMT…KMDL), 472 to 506 (GIVM…GVKP), 507 to 541 (NVMT…GNAP), and 542 to 576 (NDCT…GFSA).

This sequence belongs to the PPR family. P subfamily.

The protein resides in the mitochondrion. This is Putative pentatricopeptide repeat-containing protein At1g12700, mitochondrial from Arabidopsis thaliana (Mouse-ear cress).